The following is a 474-amino-acid chain: Putative response regulator NtrX-like (474 aa).

The Response regulatory domain maps to 5–121; that stretch reads DVLIVDDEES…KLVILLTRAC (117 aa). Position 54 is a 4-aspartylphosphate (aspartate 54). The 226-residue stretch at 143–368 folds into the Sigma-54 factor interaction domain; the sequence is LVGECSVTLK…LRNVVEWTLI (226 aa). Residues 171 to 178 and 231 to 240 each bind ATP; these read GKVGSGKE and ANNGTLYIDE.

Its function is as follows. Member of the two-component regulatory system RC0849/RC0948. This chain is Putative response regulator NtrX-like, found in Rickettsia conorii (strain ATCC VR-613 / Malish 7).